A 349-amino-acid chain; its full sequence is E3 ubiquitin-protein ligase SINA-like 10 (349 aa).

Residues 1–77 are disordered; the sequence is MARFSVCGGD…STSDDSDREV (77 aa). An RING-type; degenerate zinc finger spans residues 113 to 149; that stretch reads CPICCEPLKIPIFQCDNGHLACTLCCTKVRNRCPSCT. Positions 163–344 are SBD; it reads VIEASRVSCL…NLQIWIGHGR (182 aa). Residues 166–224 form an SIAH-type zinc finger; that stretch reads ASRVSCLNAKYGCKESTSYGNRFSHEQVCVFTPCSCPILDCHYTGYYKDLNNHVRAEHK. The Zn(2+) site is built by Cys-171, Cys-178, His-190, Cys-194, Cys-201, Cys-206, His-218, and His-223.

It belongs to the SINA (Seven in absentia) family.

The enzyme catalyses S-ubiquitinyl-[E2 ubiquitin-conjugating enzyme]-L-cysteine + [acceptor protein]-L-lysine = [E2 ubiquitin-conjugating enzyme]-L-cysteine + N(6)-ubiquitinyl-[acceptor protein]-L-lysine.. Its pathway is protein modification; protein ubiquitination. In terms of biological role, E3 ubiquitin-protein ligase that mediates ubiquitination and subsequent proteasomal degradation of target proteins. E3 ubiquitin ligases accept ubiquitin from an E2 ubiquitin-conjugating enzyme in the form of a thioester and then directly transfers the ubiquitin to targeted substrates. It probably triggers the ubiquitin-mediated degradation of different substrates. The protein is E3 ubiquitin-protein ligase SINA-like 10 of Arabidopsis thaliana (Mouse-ear cress).